A 269-amino-acid chain; its full sequence is MPGVETIKSSWADEVELDYGGLPPTTETVENGHKYVTEYKYNKDDKKTKVVRTYKISKQVVPKTVAKRRTWTKFGESKNDKPGPNSQTTMVSEEIIMQFLNSKEDEKANDPLLDPTKNIAKCRICNGEHWSVNCPYKGTAMDTNLMEKKASAAAAAAVDAPKSGKYVPPFLKDSQKGALGMRGRDDTAAIRISNLSESMTEADLEELVKKIGPQSKMYLARDKNTGLCKGFAYVHFKQRKDAAAAIEILNGHGYDHLILSVEWSKPQNN.

One can recognise an RRM domain in the interval 188–266 (AAIRISNLSE…LILSVEWSKP (79 aa)).

This sequence belongs to the eIF-3 subunit G family. Component of the eukaryotic translation initiation factor 3 (eIF-3) complex. The eIF-3 complex interacts with pix.

It localises to the cytoplasm. Functionally, RNA-binding component of the eukaryotic translation initiation factor 3 (eIF-3) complex, which is involved in protein synthesis of a specialized repertoire of mRNAs and, together with other initiation factors, stimulates binding of mRNA and methionyl-tRNAi to the 40S ribosome. The eIF-3 complex specifically targets and initiates translation of a subset of mRNAs involved in cell proliferation. This subunit can bind 18S rRNA. The sequence is that of Eukaryotic translation initiation factor 3 subunit G-1 from Drosophila erecta (Fruit fly).